A 709-amino-acid chain; its full sequence is Pentatricopeptide repeat-containing protein At5g42310, chloroplastic (709 aa).

Residues 1-54 constitute a chloroplast transit peptide; sequence MLLLQQPPLVSTRFHSLYFLTHHHHHHHRFFQPPISAFSATTSASLPSPSPSSS. PPR repeat units lie at residues 196–230, 231–267, 268–302, 303–337, 338–372, 373–407, 408–442, 443–477, 478–512, 513–547, 548–582, 583–617, 618–652, and 653–687; these read TPLTYNALIGACARNNDIEKALNLIAKMRQDGYQS, DFVNYSLVIQSLTRSNKIDSVMLLRLYKEIERDKLEL, DVQLVNDIIMGFAKSGDPSKALQLLGMAQATGLSA, KTATLVSIISALADSGRTLEAEALFEELRQSGIKP, RTRAYNALLKGYVKTGPLKDAESMVSEMEKRGVSP, DEHTYSLLIDAYVNAGRWESARIVLKEMEAGDVQP, NSFVFSRLLAGFRDRGEWQKTFQVLKEMKSIGVKP, DRQFYNVVIDTFGKFNCLDHAMTTFDRMLSEGIEP, DRVTWNTLIDCHCKHGRHIVAEEMFEAMERRGCLP, CATTYNIMINSYGDQERWDDMKRLLGKMKSQGILP, NVVTHTTLVDVYGKSGRFNDAIECLEEMKSVGLKP, SSTMYNALINAYAQRGLSEQAVNAFRVMTSDGLKP, SLLALNSLINAFGEDRRDAEAFAVLQYMKENGVKP, and DVVTYTTLMKALIRVDKFQKVPVVYEEMIMSGCKP.

It belongs to the PPR family. P subfamily. In terms of assembly, interacts with PDE338.

Its subcellular location is the plastid. The protein localises to the chloroplast stroma. It localises to the chloroplast thylakoid. It is found in the chloroplast. Functionally, required for chloroplast protein synthesis and accumulation of subunits of the thylakoid protein complexes. Activates psaC and petA translation by binding their 5'-UTRs. Required for the correct processing of petB and petD mRNAs. Interacts with the petB and petD intergenic region and is required for the generation of petB and petD monocistronic RNAs. The polypeptide is Pentatricopeptide repeat-containing protein At5g42310, chloroplastic (Arabidopsis thaliana (Mouse-ear cress)).